An 837-amino-acid chain; its full sequence is Phenylalanine--tRNA ligase beta subunit (837 aa).

The tRNA-binding domain maps to 39-149 (SASLEGIVTG…EMNIAIPKIG (111 aa)). In terms of domain architecture, B5 spans 415 to 520 (IEEQLLLLRR…RLIGYDRFDS (106 aa)). 4 residues coordinate Mg(2+): aspartate 498, aspartate 504, glutamate 507, and glutamate 508. The FDX-ACB domain maps to 743-836 (PTVPSMERDI…LKVEFSAELR (94 aa)).

Belongs to the phenylalanyl-tRNA synthetase beta subunit family. Type 1 subfamily. In terms of assembly, tetramer of two alpha and two beta subunits. Requires Mg(2+) as cofactor.

Its subcellular location is the cytoplasm. It catalyses the reaction tRNA(Phe) + L-phenylalanine + ATP = L-phenylalanyl-tRNA(Phe) + AMP + diphosphate + H(+). In Prochlorococcus marinus (strain SARG / CCMP1375 / SS120), this protein is Phenylalanine--tRNA ligase beta subunit.